Reading from the N-terminus, the 185-residue chain is Histone H1-delta (185 aa).

2 disordered regions span residues 1-37 and 90-185; these read MADTDAAPAAPAPSTPKKAAKKKASKPKTPASHPKYS and RHVK…GKKK. The H15 domain occupies 32–105; it reads SHPKYSDMIA…GASGSFLLAE (74 aa). Positions 109–185 are enriched in basic residues; it reads TPKKAAAKKA…KAAKGKGKKK (77 aa).

This sequence belongs to the histone H1/H5 family.

The protein resides in the nucleus. It localises to the chromosome. Histones H1 are necessary for the condensation of nucleosome chains into higher-order structures. In Strongylocentrotus purpuratus (Purple sea urchin), this protein is Histone H1-delta.